We begin with the raw amino-acid sequence, 859 residues long: Leucine--tRNA ligase (859 aa).

Positions 43-53 (PYPSGRIHMGH) match the 'HIGH' region motif. A 'KMSKS' region motif is present at residues 614-618 (KMSKS). Lys-617 lines the ATP pocket.

Belongs to the class-I aminoacyl-tRNA synthetase family.

The protein localises to the cytoplasm. The catalysed reaction is tRNA(Leu) + L-leucine + ATP = L-leucyl-tRNA(Leu) + AMP + diphosphate. This Magnetococcus marinus (strain ATCC BAA-1437 / JCM 17883 / MC-1) protein is Leucine--tRNA ligase.